The sequence spans 707 residues: Polyribonucleotide nucleotidyltransferase (707 aa).

Residues Asp-488 and Asp-494 each contribute to the Mg(2+) site. One can recognise a KH domain in the interval 554–613 (PRLFTMKINQDKIREVIGKGGETIRSITAETGTEINIAEDGTITIAATTQEAGDAAKKRI). The S1 motif domain occupies 623–693 (GKVYEGTVVK…DRGRVRLSIK (71 aa)).

This sequence belongs to the polyribonucleotide nucleotidyltransferase family. It depends on Mg(2+) as a cofactor.

It localises to the cytoplasm. It carries out the reaction RNA(n+1) + phosphate = RNA(n) + a ribonucleoside 5'-diphosphate. Its function is as follows. Involved in mRNA degradation. Catalyzes the phosphorolysis of single-stranded polyribonucleotides processively in the 3'- to 5'-direction. This chain is Polyribonucleotide nucleotidyltransferase, found in Neisseria meningitidis serogroup B (strain ATCC BAA-335 / MC58).